The chain runs to 750 residues: Photosystem I P700 chlorophyll a apoprotein A1 (750 aa).

8 consecutive transmembrane segments (helical) span residues 70–93, 156–179, 195–219, 291–309, 346–369, 385–411, 433–455, and 531–549; these read VFSA…FHGA, LYCT…FHYH, LNHH…HVSL, IAHH…GHMY, WHAQ…HHMY, LSLF…IFMV, AIIS…LYIH, and FLVH…LILL. Residues Cys-573 and Cys-582 each coordinate [4Fe-4S] cluster. 2 consecutive transmembrane segments (helical) span residues 589 to 610 and 664 to 686; these read HVFL…HFSW and LSAY…MFLF. Residue His-675 participates in chlorophyll a' binding. Residues Met-683 and Tyr-691 each contribute to the chlorophyll a site. Trp-692 is a phylloquinone binding site. A helical membrane pass occupies residues 724–744; the sequence is AVGVTHYLLGGIATTWAFFLA.

It belongs to the PsaA/PsaB family. The PsaA/B heterodimer binds the P700 chlorophyll special pair and subsequent electron acceptors. PSI consists of a core antenna complex that captures photons, and an electron transfer chain that converts photonic excitation into a charge separation. The eukaryotic PSI reaction center is composed of at least 11 subunits. Requires P700 is a chlorophyll a/chlorophyll a' dimer, A0 is one or more chlorophyll a, A1 is one or both phylloquinones and FX is a shared 4Fe-4S iron-sulfur center. as cofactor.

Its subcellular location is the plastid. The protein localises to the chloroplast thylakoid membrane. It catalyses the reaction reduced [plastocyanin] + hnu + oxidized [2Fe-2S]-[ferredoxin] = oxidized [plastocyanin] + reduced [2Fe-2S]-[ferredoxin]. Functionally, psaA and PsaB bind P700, the primary electron donor of photosystem I (PSI), as well as the electron acceptors A0, A1 and FX. PSI is a plastocyanin-ferredoxin oxidoreductase, converting photonic excitation into a charge separation, which transfers an electron from the donor P700 chlorophyll pair to the spectroscopically characterized acceptors A0, A1, FX, FA and FB in turn. Oxidized P700 is reduced on the lumenal side of the thylakoid membrane by plastocyanin. This is Photosystem I P700 chlorophyll a apoprotein A1 from Arabis hirsuta (Hairy rock-cress).